We begin with the raw amino-acid sequence, 51 residues long: Large ribosomal subunit protein bL33 (51 aa).

It belongs to the bacterial ribosomal protein bL33 family.

The protein is Large ribosomal subunit protein bL33 of Alkalilimnicola ehrlichii (strain ATCC BAA-1101 / DSM 17681 / MLHE-1).